The primary structure comprises 466 residues: Ribulose bisphosphate carboxylase large chain (466 aa).

An N6,N6,N6-trimethyllysine modification is found at lysine 4. The substrate site is built by asparagine 113 and threonine 163. Lysine 165 serves as the catalytic Proton acceptor. Lysine 167 is a binding site for substrate. Mg(2+) contacts are provided by lysine 191, aspartate 193, and glutamate 194. Lysine 191 carries the N6-carboxylysine modification. The Proton acceptor role is filled by histidine 284. Substrate contacts are provided by arginine 285, histidine 317, and serine 369.

Belongs to the RuBisCO large chain family. Type I subfamily. Heterohexadecamer of 8 large chains and 8 small chains; disulfide-linked. The disulfide link is formed within the large subunit homodimers. It depends on Mg(2+) as a cofactor. Post-translationally, the disulfide bond which can form in the large chain dimeric partners within the hexadecamer appears to be associated with oxidative stress and protein turnover.

It is found in the plastid. It localises to the chloroplast. It catalyses the reaction 2 (2R)-3-phosphoglycerate + 2 H(+) = D-ribulose 1,5-bisphosphate + CO2 + H2O. The catalysed reaction is D-ribulose 1,5-bisphosphate + O2 = 2-phosphoglycolate + (2R)-3-phosphoglycerate + 2 H(+). Its function is as follows. RuBisCO catalyzes two reactions: the carboxylation of D-ribulose 1,5-bisphosphate, the primary event in carbon dioxide fixation, as well as the oxidative fragmentation of the pentose substrate in the photorespiration process. Both reactions occur simultaneously and in competition at the same active site. The chain is Ribulose bisphosphate carboxylase large chain from Barleria prionitis (Porcupine flower).